Consider the following 247-residue polypeptide: Programmed cell death 1 ligand 2 (247 aa).

Residues 1-19 form the signal peptide; sequence MLLLLPILNLSLQLHPVAA. The Extracellular segment spans residues 20 to 221; that stretch reads LFTVTAPKEV…RMEPKVPRTW (202 aa). The Ig-like V-type domain maps to 21–118; it reads FTVTAPKEVY…AWDYKYLTVK (98 aa). Disulfide bonds link C42/C102 and C143/C192. Residues N64, N157, N163, and N189 are each glycosylated (N-linked (GlcNAc...) asparagine). Residues 122-203 enclose the Ig-like C2-type domain; that stretch reads SYMRIDTRIL…FWNAHMKELT (82 aa). Residues 222 to 242 form a helical membrane-spanning segment; sequence PLHVFIPACTIALIFLAIVII. The Cytoplasmic segment spans residues 243 to 247; sequence QRKRI.

This sequence belongs to the immunoglobulin superfamily. BTN/MOG family. In terms of assembly, interacts with PDCD1. Expressed in immature and mature bone marrow-derived dendritic cells and splenic dendritic cells. Highly expressed in placenta, liver and weakly expressed in heart, spleen, lymph nodes and thymus. Also expressed in some tumor cell lines of lymphoid origin.

Its subcellular location is the cell membrane. Its function is as follows. Involved in the costimulatory signal essential for T-cell proliferation and IFNG production in a PDCD1-independent manner. Interaction with PDCD1 inhibits T-cell proliferation by blocking cell cycle progression and cytokine production. The protein is Programmed cell death 1 ligand 2 (Pdcd1lg2) of Mus musculus (Mouse).